The sequence spans 197 residues: Prefoldin subunit 3 (197 aa).

Residues 1–26 (MASLALRGSSENPAPTKDTTTNPRGI) are disordered. Residues 9–23 (SSENPAPTKDTTTNP) are compositionally biased toward polar residues.

It belongs to the prefoldin subunit alpha family. In terms of assembly, heterohexamer of two PFD-alpha type and four PFD-beta type subunits.

In terms of biological role, prefoldin subunit; part of the gene cluster that mediates the biosynthesis of elsinochromes, pigments consisting of at least four interconvertible tautomers (A, B, C and D) that have a core phenolic quinone to which various side chains are attached and which play an important role in fungal pathogenesis. The non-reducing polyketide synthase PKS1 was proposed to iteratively catalyze decarboxylation between acetyl-CoA and malonyl-CoA subunits for polyketide chain elongation. The released polyketide undergoes cyclization to form an aromatic ring, and proceeds via serial modification steps to produce the heptaketide back- bone of elsinochrome. As elsinochrome has a symmetrical structure, two identical heptaketides are fused to form a core 1,2-dihydrobenzo-perylene ring structure, which can then be successively modified to produce the various derivatives of elsinochrome. Some of these reactions may be cooperatively carried out, at least in part, by the products of RDT1, OXR1 and PKS1. PRF1, embedded within the elsinochrome cluster possibly functions to stabilize some of the biosynthetic enzymes required for elsinochrome production. As prefoldin is a hexamer containing 2 a and 4 b subunits, additional prefoldin subunits, whose coding genes may not immediately link to the elsinochrome biosynthetic gene cluster, are required to fulfill the chaperone function. In addition, no methyltransferase-coding gene exists within the biosynthetic gene cluster, even though elsinochrome has four methyl groups at positions C3, C7, C8 and C12. Apparently, the identified gene cluster does not contain the entire entourage of genes responsible for elsinochrome biosynthesis. Once elsinochrome is synthesized, it must be exported outside the fungal cells, which is probably accomplished by the ECT1 transporter, to avoid toxicity. The polypeptide is Prefoldin subunit 3 (Elsinoe fawcettii (Citrus scab fungus)).